A 111-amino-acid polypeptide reads, in one-letter code: Cytochrome c2 (111 aa).

Heme c contacts are provided by Cys14, Cys17, His18, and Met83.

This sequence belongs to the cytochrome c family. Post-translationally, binds 1 heme c group covalently per subunit.

Functionally, cytochrome c2 is found mainly in purple, non-sulfur, photosynthetic bacteria where it functions as the electron donor to the oxidized bacteriochlorophyll in the photophosphorylation pathway. However, it may also have a role in the respiratory chain and is found in some non-photosynthetic bacteria. In Agrobacterium tumefaciens (strain II Chrys), this protein is Cytochrome c2.